We begin with the raw amino-acid sequence, 280 residues long: Large ribosomal subunit protein uL2 (280 aa).

Disordered regions lie at residues Ser27–Lys59 and Val225–Arg280. 2 stretches are compositionally biased toward basic residues: residues Leu37 to Lys59 and Ile268 to Arg280.

Belongs to the universal ribosomal protein uL2 family. In terms of assembly, part of the 50S ribosomal subunit. Forms a bridge to the 30S subunit in the 70S ribosome.

Its function is as follows. One of the primary rRNA binding proteins. Required for association of the 30S and 50S subunits to form the 70S ribosome, for tRNA binding and peptide bond formation. It has been suggested to have peptidyltransferase activity; this is somewhat controversial. Makes several contacts with the 16S rRNA in the 70S ribosome. The chain is Large ribosomal subunit protein uL2 from Mycobacterium bovis (strain ATCC BAA-935 / AF2122/97).